Consider the following 227-residue polypeptide: Cytochrome c oxidase subunit 2 (227 aa).

At 1–14 the chain is on the mitochondrial intermembrane side; the sequence is MAYPFQLGLQDATS. The chain crosses the membrane as a helical span at residues 15–45; it reads PIMEELMNFHDHTLMIVFLISSLVLYIISLM. Residues 46–59 lie on the Mitochondrial matrix side of the membrane; it reads LTTKLTHTSTMDAQ. The helical transmembrane segment at 60–87 threads the bilayer; it reads EVETIWTILPAVILILIALPSLRILYMM. The Mitochondrial intermembrane segment spans residues 88-227; the sequence is DEINNPVLTV…NFENWSASMI (140 aa). Cu cation is bound by residues histidine 161, cysteine 196, glutamate 198, cysteine 200, histidine 204, and methionine 207. Glutamate 198 serves as a coordination point for Mg(2+).

It belongs to the cytochrome c oxidase subunit 2 family. Component of the cytochrome c oxidase (complex IV, CIV), a multisubunit enzyme composed of 14 subunits. The complex is composed of a catalytic core of 3 subunits MT-CO1, MT-CO2 and MT-CO3, encoded in the mitochondrial DNA, and 11 supernumerary subunits COX4I, COX5A, COX5B, COX6A, COX6B, COX6C, COX7A, COX7B, COX7C, COX8 and NDUFA4, which are encoded in the nuclear genome. The complex exists as a monomer or a dimer and forms supercomplexes (SCs) in the inner mitochondrial membrane with NADH-ubiquinone oxidoreductase (complex I, CI) and ubiquinol-cytochrome c oxidoreductase (cytochrome b-c1 complex, complex III, CIII), resulting in different assemblies (supercomplex SCI(1)III(2)IV(1) and megacomplex MCI(2)III(2)IV(2)). Found in a complex with TMEM177, COA6, COX18, COX20, SCO1 and SCO2. Interacts with TMEM177 in a COX20-dependent manner. Interacts with COX20. Interacts with COX16. It depends on Cu cation as a cofactor.

It is found in the mitochondrion inner membrane. It catalyses the reaction 4 Fe(II)-[cytochrome c] + O2 + 8 H(+)(in) = 4 Fe(III)-[cytochrome c] + 2 H2O + 4 H(+)(out). Its function is as follows. Component of the cytochrome c oxidase, the last enzyme in the mitochondrial electron transport chain which drives oxidative phosphorylation. The respiratory chain contains 3 multisubunit complexes succinate dehydrogenase (complex II, CII), ubiquinol-cytochrome c oxidoreductase (cytochrome b-c1 complex, complex III, CIII) and cytochrome c oxidase (complex IV, CIV), that cooperate to transfer electrons derived from NADH and succinate to molecular oxygen, creating an electrochemical gradient over the inner membrane that drives transmembrane transport and the ATP synthase. Cytochrome c oxidase is the component of the respiratory chain that catalyzes the reduction of oxygen to water. Electrons originating from reduced cytochrome c in the intermembrane space (IMS) are transferred via the dinuclear copper A center (CU(A)) of subunit 2 and heme A of subunit 1 to the active site in subunit 1, a binuclear center (BNC) formed by heme A3 and copper B (CU(B)). The BNC reduces molecular oxygen to 2 water molecules using 4 electrons from cytochrome c in the IMS and 4 protons from the mitochondrial matrix. The polypeptide is Cytochrome c oxidase subunit 2 (MT-CO2) (Maxomys bartelsii (Bartels's Javan maxomys)).